The primary structure comprises 220 residues: Large ribosomal subunit protein uL1 (220 aa).

This sequence belongs to the universal ribosomal protein uL1 family. In terms of assembly, part of the 50S ribosomal subunit.

Functionally, binds directly to 23S rRNA. The L1 stalk is quite mobile in the ribosome, and is involved in E site tRNA release. In terms of biological role, protein L1 is also a translational repressor protein, it controls the translation of the L11 operon by binding to its mRNA. This is Large ribosomal subunit protein uL1 from Ehrlichia chaffeensis (strain ATCC CRL-10679 / Arkansas).